A 286-amino-acid polypeptide reads, in one-letter code: Prohibitin-6, mitochondrial (286 aa).

At 1 to 12 (MNFKNVKVPKGP) the chain is on the mitochondrial matrix side. The helical; Signal-anchor for type II membrane protein transmembrane segment at 13–35 (GGGVIAAVVIGGLSLYGATHTLY) threads the bilayer. Topologically, residues 36-286 (NVDGGHRAIV…AMDLDVKPKK (251 aa)) are mitochondrial intermembrane.

The protein belongs to the prohibitin family. In terms of assembly, component of a prohibitin multimeric complex in mitochondrial membranes. Mostly expressed in proliferative tissues, including vasculature, shoot and root apical tissues.

Its subcellular location is the mitochondrion inner membrane. In terms of biological role, prohibitin probably acts as a holdase/unfoldase for the stabilization of newly synthesized mitochondrial proteins. In Arabidopsis thaliana (Mouse-ear cress), this protein is Prohibitin-6, mitochondrial (PHB6).